The following is a 383-amino-acid chain: MLIVADENIPLLDAFFAGFGEIRRYPGRAIDAASAKDADVLLVRSVTRVDRQLLEGSKVRFVGTCTIGTDHLDLDYFADAGIHWSSAPGCNARGVVDYVLGSLLTLAELEGVDLNRRVYGVVGAGEVGGRLVRVLHGLGWKVLVCDPVREASEGGEFVSLETILAQCDVISLHTPLQRGGEHPTWHLLDQEKLASLRPGAWLINASRGPVVDNVALRELLLDREDVHAVLDVWEGEPQVDLQLADLCTLATPHIAGYSLDGKQRGTAQIYQAFCRWRGEPEQVRLADLLPAHSLARIELDANADPAWALATLCRAVYDPRRDDADFRRSLSDDVAEQRAAFDLLRKHYPVRREIEGLAVGLRGEAPQLAQMVSALGAELVGVA.

2 residues coordinate substrate: Ser45 and Thr66. NAD(+) contacts are provided by residues Asp146, Thr174, Ala205–Arg207, and Asp231. Residue Arg207 is part of the active site. Glu236 is a catalytic residue. His253 serves as the catalytic Proton donor. Gly256 is an NAD(+) binding site. Residue Tyr257 coordinates substrate.

The protein belongs to the D-isomer specific 2-hydroxyacid dehydrogenase family. PdxB subfamily. As to quaternary structure, homodimer.

The protein localises to the cytoplasm. The catalysed reaction is 4-phospho-D-erythronate + NAD(+) = (R)-3-hydroxy-2-oxo-4-phosphooxybutanoate + NADH + H(+). The protein operates within cofactor biosynthesis; pyridoxine 5'-phosphate biosynthesis; pyridoxine 5'-phosphate from D-erythrose 4-phosphate: step 2/5. Its function is as follows. Catalyzes the oxidation of erythronate-4-phosphate to 3-hydroxy-2-oxo-4-phosphonooxybutanoate. The protein is Erythronate-4-phosphate dehydrogenase of Pseudomonas entomophila (strain L48).